Consider the following 488-residue polypeptide: 7,8-epoxymelianol synthase CYP88A51 (488 aa).

The chain crosses the membrane as a helical span at residues 4–24; it reads NFLWPMLAMFLGSLVVMFGFL. A heme-binding site is contributed by Cys436.

This sequence belongs to the cytochrome P450 family. Heme is required as a cofactor. Accumulates in mature fruits and in juice vesicles.

It is found in the membrane. It catalyses the reaction melianol + reduced [NADPH--hemoprotein reductase] + O2 = 7,8-epoxymelianol + oxidized [NADPH--hemoprotein reductase] + H2O + H(+). Its pathway is secondary metabolite biosynthesis; terpenoid biosynthesis. Monooxygenase involved in the biosynthesis of limonoids triterpene natural products such as limonin, a compound with insecticidal activity responsible for the bitter taste in citrus. Catalyzes the epoxidation of melianol to produce 7,8-epoxymelianol. This Citrus sinensis (Sweet orange) protein is 7,8-epoxymelianol synthase CYP88A51.